A 181-amino-acid chain; its full sequence is Protein GrpE (181 aa).

Residues 1 to 12 are compositionally biased toward polar residues; that stretch reads MENTQENPTTPS. The interval 1 to 33 is disordered; the sequence is MENTQENPTTPSAEDIGSEKQAAQGAAPAAEAA. Positions 21-33 are enriched in low complexity; it reads QAAQGAAPAAEAA.

Belongs to the GrpE family. As to quaternary structure, homodimer.

It localises to the cytoplasm. Functionally, participates actively in the response to hyperosmotic and heat shock by preventing the aggregation of stress-denatured proteins, in association with DnaK and GrpE. It is the nucleotide exchange factor for DnaK and may function as a thermosensor. Unfolded proteins bind initially to DnaJ; upon interaction with the DnaJ-bound protein, DnaK hydrolyzes its bound ATP, resulting in the formation of a stable complex. GrpE releases ADP from DnaK; ATP binding to DnaK triggers the release of the substrate protein, thus completing the reaction cycle. Several rounds of ATP-dependent interactions between DnaJ, DnaK and GrpE are required for fully efficient folding. This chain is Protein GrpE, found in Burkholderia cenocepacia (strain HI2424).